Here is a 268-residue protein sequence, read N- to C-terminus: Very-long-chain aldehyde decarbonylase GL1-8 (268 aa).

4 helical membrane-spanning segments follow: residues Ile26–Phe46, Cys70–Tyr90, Trp107–Trp127, and Ile164–Thr184. The 136-residue stretch at Val114 to Thr249 folds into the Fatty acid hydroxylase domain.

The protein belongs to the sterol desaturase family. In terms of assembly, homodimer.

The protein resides in the endoplasmic reticulum membrane. The catalysed reaction is a long-chain fatty aldehyde + 2 NADPH + O2 + H(+) = a long-chain alkane + formate + 2 NADP(+) + H2O. In terms of biological role, aldehyde decarbonylase involved in the conversion of aldehydes to alkanes. Core component of a very-long-chain alkane synthesis complex. The polypeptide is Very-long-chain aldehyde decarbonylase GL1-8 (Oryza sativa subsp. indica (Rice)).